The chain runs to 329 residues: MKISILGAGAWGTALALQISRRHQVSLWTRNQAHIVDMQVTRANLQYLGDFAFGDQLAVEGDLGRALDGADLIVSVVPTNGFRNALKEIKRLGCDAPVVWASKGLEAATAKLPHEVAQDELGDSRHWGVLSGPSFAAELVRGLPTAVTLAANDAEFAARAGAMLHGGNFRVYTSTDVIGVSVGGALKNVLAIAAGISDGMQCGNNARAALITRGIAEMTRFGVALGGAKETFMGLTGAGDLILTCTGQYSRNREVGLRLANGQTLQEILKTLGHVAEGVHTAREVVKRAGQLGVEMPITQEVDQVLSHGRSPRQAMENLLSREQKSEAL.

Trp11, Arg30, and Lys103 together coordinate NADPH. Sn-glycerol 3-phosphate contacts are provided by Lys103, Gly132, and Ser134. Ala136 serves as a coordination point for NADPH. Sn-glycerol 3-phosphate-binding residues include Lys187, Asp240, Ser250, Arg251, and Asn252. The active-site Proton acceptor is the Lys187. Arg251 lines the NADPH pocket. NADPH-binding residues include Val275 and Glu277.

The protein belongs to the NAD-dependent glycerol-3-phosphate dehydrogenase family.

It is found in the cytoplasm. The enzyme catalyses sn-glycerol 3-phosphate + NAD(+) = dihydroxyacetone phosphate + NADH + H(+). The catalysed reaction is sn-glycerol 3-phosphate + NADP(+) = dihydroxyacetone phosphate + NADPH + H(+). It functions in the pathway membrane lipid metabolism; glycerophospholipid metabolism. Functionally, catalyzes the reduction of the glycolytic intermediate dihydroxyacetone phosphate (DHAP) to sn-glycerol 3-phosphate (G3P), the key precursor for phospholipid synthesis. The sequence is that of Glycerol-3-phosphate dehydrogenase [NAD(P)+] from Methylobacillus flagellatus (strain ATCC 51484 / DSM 6875 / VKM B-1610 / KT).